The following is a 102-amino-acid chain: NADH-quinone oxidoreductase subunit K (102 aa).

The next 3 membrane-spanning stretches (helical) occupy residues 5-25 (ITHYLIVSALIFTIGIAGIFL), 31-51 (IIILMSIELILLSVNLNFVAF), and 66-86 (FILTVAAAEAAIGLAILVVFF).

This sequence belongs to the complex I subunit 4L family. As to quaternary structure, NDH-1 is composed of 14 different subunits. Subunits NuoA, H, J, K, L, M, N constitute the membrane sector of the complex.

The protein localises to the cell inner membrane. It catalyses the reaction a quinone + NADH + 5 H(+)(in) = a quinol + NAD(+) + 4 H(+)(out). Functionally, NDH-1 shuttles electrons from NADH, via FMN and iron-sulfur (Fe-S) centers, to quinones in the respiratory chain. The immediate electron acceptor for the enzyme in this species is believed to be ubiquinone. Couples the redox reaction to proton translocation (for every two electrons transferred, four hydrogen ions are translocated across the cytoplasmic membrane), and thus conserves the redox energy in a proton gradient. The polypeptide is NADH-quinone oxidoreductase subunit K (Bartonella quintana (strain Toulouse) (Rochalimaea quintana)).